The chain runs to 221 residues: Serine/arginine-rich splicing factor 2 (221 aa).

In terms of domain architecture, RRM spans 14–92 (TSLKVDNLTY…RELRVQMARY (79 aa)). Residues 91–221 (RYGRPPDSHH…SPEEEGAVSS (131 aa)) are disordered. Basic residues-rich tracts occupy residues 117–171 (RRSR…RSKS) and 179–189 (SRSRSRSRSRS).

The protein belongs to the splicing factor SR family. Extensively phosphorylated on serine residues in the RS domain.

It localises to the nucleus. Its function is as follows. Necessary for the splicing of pre-mRNA. It is required for formation of the earliest ATP-dependent splicing complex and interacts with spliceosomal components bound to both the 5'- and 3'-splice sites during spliceosome assembly. It also is required for ATP-dependent interactions of both U1 and U2 snRNPs with pre-mRNA. The protein is Serine/arginine-rich splicing factor 2 (SRSF2) of Gallus gallus (Chicken).